The following is a 380-amino-acid chain: Cytochrome b (380 aa).

A run of 4 helical transmembrane segments spans residues 34–54 (FGSL…LLAM), 78–99 (WLIR…YLHI), 114–134 (WNTG…GYVL), and 179–199 (FFAL…IHLT). Heme b contacts are provided by histidine 84 and histidine 98. 2 residues coordinate heme b: histidine 183 and histidine 197. Histidine 202 contacts a ubiquinone. 4 helical membrane passes run 227–247 (LKDI…ALFS), 289–309 (LGGV…PLLH), 321–341 (LSQL…WVGS), and 348–368 (FIII…ILLP).

It belongs to the cytochrome b family. In terms of assembly, the cytochrome bc1 complex contains 11 subunits: 3 respiratory subunits (MT-CYB, CYC1 and UQCRFS1), 2 core proteins (UQCRC1 and UQCRC2) and 6 low-molecular weight proteins (UQCRH/QCR6, UQCRB/QCR7, UQCRQ/QCR8, UQCR10/QCR9, UQCR11/QCR10 and a cleavage product of UQCRFS1). This cytochrome bc1 complex then forms a dimer. Heme b is required as a cofactor.

It is found in the mitochondrion inner membrane. Its function is as follows. Component of the ubiquinol-cytochrome c reductase complex (complex III or cytochrome b-c1 complex) that is part of the mitochondrial respiratory chain. The b-c1 complex mediates electron transfer from ubiquinol to cytochrome c. Contributes to the generation of a proton gradient across the mitochondrial membrane that is then used for ATP synthesis. This chain is Cytochrome b (MT-CYB), found in Pelagodroma marina (White-faced storm-petrel).